We begin with the raw amino-acid sequence, 557 residues long: Dihydroxy-acid dehydratase (557 aa).

Cys-50 contacts [2Fe-2S] cluster. Asp-82 contacts Mg(2+). [2Fe-2S] cluster is bound at residue Cys-123. Asp-124 and Lys-125 together coordinate Mg(2+). An N6-carboxylysine modification is found at Lys-125. Cys-195 serves as a coordination point for [2Fe-2S] cluster. Glu-447 contacts Mg(2+). Ser-473 (proton acceptor) is an active-site residue.

It belongs to the IlvD/Edd family. Homodimer. Requires [2Fe-2S] cluster as cofactor. Mg(2+) is required as a cofactor.

It catalyses the reaction (2R)-2,3-dihydroxy-3-methylbutanoate = 3-methyl-2-oxobutanoate + H2O. It carries out the reaction (2R,3R)-2,3-dihydroxy-3-methylpentanoate = (S)-3-methyl-2-oxopentanoate + H2O. It participates in amino-acid biosynthesis; L-isoleucine biosynthesis; L-isoleucine from 2-oxobutanoate: step 3/4. It functions in the pathway amino-acid biosynthesis; L-valine biosynthesis; L-valine from pyruvate: step 3/4. Its function is as follows. Functions in the biosynthesis of branched-chain amino acids. Catalyzes the dehydration of (2R,3R)-2,3-dihydroxy-3-methylpentanoate (2,3-dihydroxy-3-methylvalerate) into 2-oxo-3-methylpentanoate (2-oxo-3-methylvalerate) and of (2R)-2,3-dihydroxy-3-methylbutanoate (2,3-dihydroxyisovalerate) into 2-oxo-3-methylbutanoate (2-oxoisovalerate), the penultimate precursor to L-isoleucine and L-valine, respectively. This is Dihydroxy-acid dehydratase from Metallosphaera sedula (strain ATCC 51363 / DSM 5348 / JCM 9185 / NBRC 15509 / TH2).